We begin with the raw amino-acid sequence, 305 residues long: Elongation factor Ts, mitochondrial (305 aa).

This sequence belongs to the EF-Ts family.

It localises to the mitochondrion. In terms of biological role, associates with the EF-Tu.GDP complex and induces the exchange of GDP to GTP. It remains bound to the aminoacyl-tRNA.EF-Tu.GTP complex up to the GTP hydrolysis stage on the ribosome. The sequence is that of Elongation factor Ts, mitochondrial (tsfm) from Danio rerio (Zebrafish).